The chain runs to 101 residues: Small ribosomal subunit protein bS6 (101 aa).

It belongs to the bacterial ribosomal protein bS6 family.

Its function is as follows. Binds together with bS18 to 16S ribosomal RNA. This Micrococcus luteus (strain ATCC 4698 / DSM 20030 / JCM 1464 / CCM 169 / CCUG 5858 / IAM 1056 / NBRC 3333 / NCIMB 9278 / NCTC 2665 / VKM Ac-2230) (Micrococcus lysodeikticus) protein is Small ribosomal subunit protein bS6.